The chain runs to 1015 residues: DNA polymerase catalytic subunit (1015 aa).

The protein belongs to the DNA polymerase type-B family. As to quaternary structure, forms a complex with the major DNA-binding protein BALF2, the DNA polymerase processivity factor BMRF1, and the alkaline exonuclease BGLF5. Interacts with the putative helicase-primase complex composed of BBLF4, BSLF1 and BBLF2/3 proteins; these interactions may coordinate leading and lagging strand DNA synthesis at the replication fork.

The protein resides in the host nucleus. It catalyses the reaction DNA(n) + a 2'-deoxyribonucleoside 5'-triphosphate = DNA(n+1) + diphosphate. Functionally, replicates viral genomic DNA in the late phase of lytic infection, producing long concatemeric DNA. The replication complex is composed of six viral proteins: the DNA polymerase, processivity factor, primase, primase-associated factor, helicase, and ssDNA-binding protein. This chain is DNA polymerase catalytic subunit, found in Homo sapiens (Human).